Reading from the N-terminus, the 487-residue chain is UDP-glucosyl transferase 73CC6 (487 aa).

His17 serves as the catalytic Proton acceptor. The active-site Charge relay is Asp114. UDP-binding residues include Ser282, Trp346, Ala347, His364, Asn368, Ser369, Glu372, and Tyr386.

This sequence belongs to the UDP-glycosyltransferase family. In terms of tissue distribution, mainly expressed in flowers and flower buds and, to a lesser extent, in leaves, stems and roots.

Its pathway is secondary metabolite biosynthesis; terpenoid biosynthesis. Its function is as follows. Component of the oleanane-type triterpene saponins (e.g. saponarioside A and saponarioside B) biosynthetic pathway, leading to the production of natural products with detergent properties used as traditional sources of soap. A glycosyltransferase that mediates the conversion of QA-di to QA-tri via the elongation of the C-3 sugar chain with a D-xylose. In Saponaria officinalis (Common soapwort), this protein is UDP-glucosyl transferase 73CC6.